A 784-amino-acid chain; its full sequence is Phosphate transporter PHO1 homolog 1 (784 aa).

Over 1–387 (MVKFTKQFEG…HHRKESHSVT (387 aa)) the chain is Cytoplasmic. The SPX domain maps to 2-335 (VKFTKQFEGQ…GKQILPIYLK (334 aa)). Residues 388–408 (FFIGLFTGCFVALLAGYIIVA) traverse the membrane as a helical segment. Over 409–429 (HLTGMYRQHSANTFYMETAYP) the chain is Extracellular. The chain crosses the membrane as a helical span at residues 430–450 (VLSMFGLLFLHLFLYGCNIFM). The Cytoplasmic segment spans residues 451-474 (WRKARINYSFIFELGSKNELKYRD). The chain crosses the membrane as a helical span at residues 475-495 (VFLICTASMSAIAGVMFVHLS). The Extracellular portion of the chain corresponds to 496 to 507 (LLEKGYSFRQVQ). Residues 508–528 (VIPGLLLLGFLLILICPLNIF) form a helical membrane-spanning segment. Over 529–654 (YKSSRYRLIS…TKVAYEKERS (126 aa)) the chain is Cytoplasmic. Residues 593-784 (MRVKYYRDLA…LPFREVDEED (192 aa)) enclose the EXS domain. A helical transmembrane segment spans residues 655-675 (LGWLCLVVAMSSVATIYQLYW). The Extracellular segment spans residues 676 to 703 (DFVKDWGLLQHNSNNPWLRNQLMLRQKS). A helical transmembrane segment spans residues 704-724 (IYYFSMVLNLVLRLAWLQTVL). Residues 725 to 784 (HSSFEHVDYRVTGLFLAALEVIRRGQWNFYRLENEHLNNAGKFRAVKTVPLPFREVDEED) lie on the Cytoplasmic side of the membrane.

This sequence belongs to the SYG1 (TC 2.A.94) family. In terms of tissue distribution, expressed in vascular cylinder of roots, leaves, stems, petals, sepals and filaments. Expressed in receptacle, stigma apex and anther connective tissue.

The protein resides in the cell membrane. In terms of biological role, contributes to the loading of inorganic phosphate (Pi) into the root xylem vessels. The polypeptide is Phosphate transporter PHO1 homolog 1 (PHO1-H1) (Arabidopsis thaliana (Mouse-ear cress)).